Here is a 782-residue protein sequence, read N- to C-terminus: Zinc finger and SCAN domain-containing protein 10 (782 aa).

The interval 1-37 (MLAEPVPDALEQEHPGAVKLEEDEVGEEDPRLAESRP) is disordered. Residues 1-71 (MLAEPVPDAL…GRLRELCNHW (71 aa)) form the SCAN box domain. Composition is skewed to basic and acidic residues over residues 11 to 20 (EQEHPGAVKL) and 28 to 37 (EDPRLAESRP). Serine 160 and serine 206 each carry phosphoserine. 2 disordered regions span residues 197-233 (LAPS…ENSR) and 290-321 (SQTE…TPAD). 14 C2H2-type zinc fingers span residues 292 to 315 (TEKP…STGW), 321 to 343 (DGSE…EMQF), 349 to 371 (GVNF…NLQP), 377 to 399 (SFRC…HMRT), 421 to 443 (LTKH…NQGF), 467 to 489 (EGKT…TFKR), 495 to 517 (RHLR…SLSS), 523 to 545 (PYVC…HTRR), 551 to 573 (RPFS…SHQQ), 579 to 601 (KPHA…RHLL), 607 to 629 (RPYH…RHVR), 635 to 657 (KPCR…RHQR), 669 to 691 (ICGH…TGER), and 697 to 719 (TCGR…TGSK). Residues 302 to 313 (LTQTVGQETSST) show a composition bias toward polar residues. Glutamine 485 carries the N5-methylglutamine modification. Residues 491–522 (SSLKRHLRNHAKDKDHLSSEDPGSLSSSQESN) form a disordered region. The segment covering 500-509 (HAKDKDHLSS) has biased composition (basic and acidic residues). The segment covering 510–521 (EDPGSLSSSQES) has biased composition (low complexity).

In terms of assembly, interacts with POU5F1/OCT4 and SOX2. Post-translationally, methylated at Gln-485 by N6AMT1. Embryonic stem (ES) cell-specific. Not expressed in adult, except in testis.

Its subcellular location is the nucleus. In terms of biological role, embryonic stem (ES) cell-specific transcription factor required to maintain ES cell pluripotency. Can both activate and /or repress expression of target genes, depending on the context. Specifically binds the 5'-[GA]CGCNNGCG[CT]-3' DNA consensus sequence. Regulates expression of POU5F1/OCT4, ZSCAN4 and ALYREF/THOC4. The protein is Zinc finger and SCAN domain-containing protein 10 (Zscan10) of Mus musculus (Mouse).